A 184-amino-acid polypeptide reads, in one-letter code: Oligoribonuclease (184 aa).

In terms of domain architecture, Exonuclease spans 10 to 172; the sequence is LVWVDCEMTG…ADVLESIAEL (163 aa). Residue tyrosine 129 is part of the active site.

It belongs to the oligoribonuclease family.

The protein resides in the cytoplasm. 3'-to-5' exoribonuclease specific for small oligoribonucleotides. This is Oligoribonuclease from Tropheryma whipplei (strain Twist) (Whipple's bacillus).